A 756-amino-acid polypeptide reads, in one-letter code: MAWSPPATLFLFLLLLGQPPPSRPQSLGTTKLRLVGPESKPEEGRLEVLHQGQWGTVCDDNFAIQEATVACRQLGFEAALTWAHSAKYGQGEGPIWLDNVRCVGTESSLDQCGSNGWGVSDCSHSEDVGVICHPRRHRGYLSETVSNALGPQGRRLEEVRLKPILASAKQHSPVTEGAVEVKYEGHWRQVCDQGWTMNNSRVVCGMLGFPSEVPVDSHYYRKVWDLKMRDPKSRLKSLTNKNSFWIHQVTCLGTEPHMANCQVQVAPARGKLRPACPGGMHAVVSCVAGPHFRPPKTKPQRKGSWAEEPRVRLRSGAQVGEGRVEVLMNRQWGTVCDHRWNLISASVVCRQLGFGSAREALFGARLGQGLGPIHLSEVRCRGYERTLSDCPALEGSQNGCQHENDAAVRCNVPNMGFQNQVRLAGGRIPEEGLLEVQVEVNGVPRWGSVCSENWGLTEAMVACRQLGLGFAIHAYKETWFWSGTPRAQEVVMSGVRCSGTELALQQCQRHGPVHCSHGGGRFLAGVSCMDSAPDLVMNAQLVQETAYLEDRPLSQLYCAHEENCLSKSADHMDWPYGYRRLLRFSTQIYNLGRTDFRPKTGRDSWVWHQCHRHYHSIEVFTHYDLLTLNGSKVAEGHKASFCLEDTNCPTGLQRRYACANFGEQGVTVGCWDTYRHDIDCQWVDITDVGPGNYIFQVIVNPHYEVAESDFSNNMLQCRCKYDGHRVWLHNCHTGNSYPANAELSLEQEQRLRNNLI.

A signal peptide spans 1-24; the sequence is MAWSPPATLFLFLLLLGQPPPSRP. 4 SRCR domains span residues 32 to 133, 159 to 287, 311 to 411, and 421 to 529; these read LRLV…VICH, VRLK…VSCV, VRLR…VRCN, and VRLA…VSCM. 17 disulfide bridges follow: Cys-58-Cys-122, Cys-71-Cys-132, Cys-102-Cys-112, Cys-191-Cys-276, Cys-204-Cys-286, Cys-251-Cys-261, Cys-336-Cys-400, Cys-349-Cys-410, Cys-380-Cys-390, Cys-450-Cys-515, Cys-463-Cys-528, Cys-497-Cys-507, Cys-558-Cys-564, Cys-610-Cys-658, Cys-642-Cys-648, Cys-670-Cys-680, and Cys-717-Cys-731. A glycan (N-linked (GlcNAc...) asparagine) is linked at Asn-198. The tract at residues 533-736 is lysyl-oxidase like; that stretch reads PDLVMNAQLV…WLHNCHTGNS (204 aa). Residues His-611, His-613, and His-615 each contribute to the Cu cation site. Asn-629 carries N-linked (GlcNAc...) asparagine glycosylation. Positions 638–674 form a cross-link, lysine tyrosylquinone (Lys-Tyr); that stretch reads KASFCLEDTNCPTGLQRRYACANFGEQGVTVGCWDTY. Tyr-674 is modified (2',4',5'-topaquinone).

It belongs to the lysyl oxidase family. Cu cation serves as cofactor. Requires lysine tyrosylquinone residue as cofactor. The lysine tyrosylquinone cross-link (LTQ) is generated by condensation of the epsilon-amino group of a lysine with a topaquinone produced by oxidation of tyrosine. Post-translationally, may be proteolytically cleaved by BMP1. In terms of tissue distribution, expressed in many tissues, the highest levels among the tissues studied being in the skeletal muscle, testis and pancreas. Expressed in cartilage.

The protein localises to the secreted. The protein resides in the extracellular space. The enzyme catalyses L-lysyl-[protein] + O2 + H2O = (S)-2-amino-6-oxohexanoyl-[protein] + H2O2 + NH4(+). Its activity is regulated as follows. Inhibited by beta-aminopropionitrile (BAPN). Functionally, catalyzes the oxidative deamination of lysine and hydroxylysine residues in collagen and elastin, resulting in the formation of covalent cross-linkages, and the stabilization of collagen and elastin fibers. The protein is Lysyl oxidase homolog 4 (LOXL4) of Homo sapiens (Human).